The primary structure comprises 53 residues: ATP synthase protein 8 (53 aa).

A helical membrane pass occupies residues 4-24 (MAPISWLLLFIVFSITFILFC).

This sequence belongs to the ATPase protein 8 family. F-type ATPases have 2 components, CF(1) - the catalytic core - and CF(0) - the membrane proton channel.

The protein localises to the mitochondrion membrane. Its function is as follows. Mitochondrial membrane ATP synthase (F(1)F(0) ATP synthase or Complex V) produces ATP from ADP in the presence of a proton gradient across the membrane which is generated by electron transport complexes of the respiratory chain. F-type ATPases consist of two structural domains, F(1) - containing the extramembraneous catalytic core and F(0) - containing the membrane proton channel, linked together by a central stalk and a peripheral stalk. During catalysis, ATP synthesis in the catalytic domain of F(1) is coupled via a rotary mechanism of the central stalk subunits to proton translocation. Part of the complex F(0) domain. Minor subunit located with subunit a in the membrane. This chain is ATP synthase protein 8 (mt:ATPase8), found in Drosophila yakuba (Fruit fly).